The following is a 177-amino-acid chain: uncharacterized protein (177 aa).

A run of 4 helical transmembrane segments spans residues 20–42 (NLVSYAVGGILAIAGYVLILLAL), 62–84 (VVLWIIAVLIVIFAVGISFVSLS), 94–116 (AMSSFLVGVILFYILSVIGGYFI), and 136–158 (GLLYFIGTLLLIVIVGIIVIIVA).

It localises to the cell membrane. This is an uncharacterized protein from Methanocaldococcus jannaschii (strain ATCC 43067 / DSM 2661 / JAL-1 / JCM 10045 / NBRC 100440) (Methanococcus jannaschii).